The chain runs to 527 residues: Thymidine kinase (527 aa).

Positions 1–57 (MTGRGQPPKKNDTYDYPRKQPPKNGSYDNYDYPTSTKTRSTNKQRKDSNYPPRETIF) are disordered. Residues 9-18 (KKNDTYDYPR) show a composition bias toward basic and acidic residues. The segment covering 32–41 (YPTSTKTRST) has biased composition (polar residues). 216-223 (GSIGVGKT) provides a ligand contact to ATP. Glutamate 243 serves as the catalytic Proton acceptor. Positions 260 and 281 each coordinate substrate. An ATP-binding site is contributed by arginine 368. Arginine 374 is a substrate binding site.

It belongs to the herpesviridae thymidine kinase family. As to quaternary structure, homodimer.

It carries out the reaction thymidine + ATP = dTMP + ADP + H(+). In terms of biological role, catalyzes the transfer of the gamma-phospho group of ATP to thymidine to generate dTMP in the salvage pathway of pyrimidine synthesis. The dTMP serves as a substrate for DNA polymerase during viral DNA replication. Allows the virus to be reactivated and to grow in non-proliferative cells lacking a high concentration of phosphorylated nucleic acid precursors. The polypeptide is Thymidine kinase (Saimiriine herpesvirus 2 (strain 11) (SaHV-2)).